The sequence spans 157 residues: Cytochrome P450 monooxygenase atG (157 aa).

Cys-97 contacts heme.

Belongs to the cytochrome P450 family. Heme is required as a cofactor.

It participates in secondary metabolite biosynthesis. In terms of biological role, cytochrome P450 monooxygenase; part of the gene cluster that mediates the biosynthesis of terreic acid, a quinone epoxide inhibitor of Bruton's tyrosine kinase (BTK). The first step of the pathway is the synthesis of 6-methylsalicylic acid (6-MSA) by the 6-methylsalicylic acid synthase atX. In the biosynthesis of 6-MSA, atX utilizes one acetyl-CoA and three malonyl-CoAs as its substrates and catalyzes a series of programmed reactions including Claisen condensation, reduction, aldol cyclization, and the hydrolytic cleavage that yields 6-MSA. The 6-methylsalicylate 1-monooxygenase atA then catalyzes the decarboxylative hydroxylation of 6-MSA to 3-methylcatechol. The next step is the conversion of 3-methylcatechol to 3-methyl-1,2,4-benzenetriol by cytochrome P450 monooxygenase atE, which is enhanced by cytochrome P450 monooxygenase atG. Then, the epoxidase atD catalyzes the epoxidation and hydroxyl oxidation of 3-methyl-1,2,4-benzenetriol to terremutin. Lastly, GMC oxidoreductase atC oxidizes terremutin to terreic acid. The sequence is that of Cytochrome P450 monooxygenase atG from Aspergillus terreus (strain NIH 2624 / FGSC A1156).